A 322-amino-acid polypeptide reads, in one-letter code: Solute carrier family 25 member 16 (322 aa).

Solcar repeat units lie at residues 34–120, 128–219, and 241–322; these read FYWL…YKTF, SGHV…LKSV, and LKTH…AVAF.

Belongs to the mitochondrial carrier (TC 2.A.29) family.

Its subcellular location is the mitochondrion inner membrane. Functionally, may be involved in the transport of coenzyme A in the mitochondrial matrix. Very little is known about the physiological function of this carrier. The sequence is that of Solute carrier family 25 member 16 from Rattus norvegicus (Rat).